The following is a 61-amino-acid chain: Sperm protamine P1 (61 aa).

The disordered stretch occupies residues 1–61 (MARYRHSRSR…RYSRRRRRRY (61 aa)).

The protein belongs to the protamine P1 family. In terms of tissue distribution, testis.

It is found in the nucleus. The protein resides in the chromosome. Its function is as follows. Protamines substitute for histones in the chromatin of sperm during the haploid phase of spermatogenesis. They compact sperm DNA into a highly condensed, stable and inactive complex. The chain is Sperm protamine P1 (PRM1) from Setonix brachyurus (Quokka).